The primary structure comprises 863 residues: Protein ARG5,6, mitochondrial (863 aa).

The transit peptide at Met-1–Ser-65 directs the protein to the mitochondrion. The N-acetyltransferase domain occupies Lys-353 to Ser-505. A Phosphoserine modification is found at Ser-359. The active site involves Cys-675.

The protein in the N-terminal section; belongs to the acetylglutamate kinase family. This sequence in the C-terminal section; belongs to the NAGSA dehydrogenase family. Post-translationally, the protein precursor is cleaved into the two biologically active enzymes, the kinase and the reductase.

The protein resides in the mitochondrion. It carries out the reaction N-acetyl-L-glutamate 5-semialdehyde + phosphate + NADP(+) = N-acetyl-L-glutamyl 5-phosphate + NADPH + H(+). It catalyses the reaction N-acetyl-L-glutamate + ATP = N-acetyl-L-glutamyl 5-phosphate + ADP. Its pathway is amino-acid biosynthesis; L-arginine biosynthesis; N(2)-acetyl-L-ornithine from L-glutamate: step 2/4. The protein operates within amino-acid biosynthesis; L-arginine biosynthesis; N(2)-acetyl-L-ornithine from L-glutamate: step 3/4. The kinase activity is inhibited by arginine. The sequence is that of Protein ARG5,6, mitochondrial (ARG5,6) from Saccharomyces cerevisiae (strain ATCC 204508 / S288c) (Baker's yeast).